The chain runs to 257 residues: Ribosomal RNA small subunit methyltransferase J (257 aa).

Residues 107 to 108, 123 to 124, and aspartate 177 each bind S-adenosyl-L-methionine; these read RD and ER.

The protein belongs to the methyltransferase superfamily. RsmJ family.

The protein resides in the cytoplasm. The enzyme catalyses guanosine(1516) in 16S rRNA + S-adenosyl-L-methionine = N(2)-methylguanosine(1516) in 16S rRNA + S-adenosyl-L-homocysteine + H(+). Functionally, specifically methylates the guanosine in position 1516 of 16S rRNA. The chain is Ribosomal RNA small subunit methyltransferase J from Haemophilus influenzae (strain PittEE).